The following is a 347-amino-acid chain: Phosphoribosylformylglycinamidine cyclo-ligase (347 aa).

It belongs to the AIR synthase family.

The protein resides in the cytoplasm. The enzyme catalyses 2-formamido-N(1)-(5-O-phospho-beta-D-ribosyl)acetamidine + ATP = 5-amino-1-(5-phospho-beta-D-ribosyl)imidazole + ADP + phosphate + H(+). Its pathway is purine metabolism; IMP biosynthesis via de novo pathway; 5-amino-1-(5-phospho-D-ribosyl)imidazole from N(2)-formyl-N(1)-(5-phospho-D-ribosyl)glycinamide: step 2/2. The sequence is that of Phosphoribosylformylglycinamidine cyclo-ligase from Prochlorococcus marinus (strain AS9601).